Reading from the N-terminus, the 311-residue chain is Systemic RNA interference defective protein 2 (311 aa).

The N-terminal stretch at 1–20 (MPRFVYFCFALIALLPISWT) is a signal peptide. Over 21–188 (MDGILITDVE…EETKTVVNKN (168 aa)) the chain is Extracellular. A helical transmembrane segment spans residues 189-209 (GGAVAVAVIEGIALIAILAFL). The Cytoplasmic segment spans residues 210–311 (GYRTMVNHKL…NDPFATLESW (102 aa)). Residues 287 to 301 (NSSAAQPSTTSNGQF) show a composition bias toward polar residues. The segment at 287–311 (NSSAAQPSTTSNGQFNDPFATLESW) is disordered.

As to expression, expressed in the intestinal lumen. Also present, at lower levels, in the excretory duct cells.

It is found in the apical cell membrane. The protein localises to the cytoplasm. Functionally, plays a role in RNA-mediated gene silencing by mediating endocytic uptake of double-stranded RNA (dsRNA) ingested from the environment into intestinal cells from the intestinal lumen. Selective for dsRNAs of at least 50 bp. Required for avoidance behavior induced by small RNAs derived from pathogenic bacteria such as P.aeruginosa. The protein is Systemic RNA interference defective protein 2 of Caenorhabditis elegans.